We begin with the raw amino-acid sequence, 283 residues long: MRVEFTKYQGLGNDFILIDNRHQAQPCLTPDQAVQMCDRNFGIGGDGVIFALPPEGDTDYTMRIYNSDGSEPEMCGNGIRCLARFLAHLEGKPLQTDITYRIHTLAGTITPSLQADGLVKVDMGPPFLVPQEIPTTLGEGTDPVVNQPLEVAGQSWPVTCVSMGNPHCITFVDDLEAIDFQTLGPQFEHHPVFPQRINTEFIQVIRPDYLKMLVWERGAGPTLACGTGACAVLVAGVLTGKSQSQATIELPGGPLQIRWAGEGQSVFMTGPAEKVFTGIYETG.

Substrate-binding residues include Asn13 and Asn66. Cys75 functions as the Proton donor in the catalytic mechanism. Residues 76 to 77 (GN), Asn165, Asn198, and 216 to 217 (ER) each bind substrate. Residue Cys225 is the Proton acceptor of the active site. 226-227 (GT) lines the substrate pocket.

Belongs to the diaminopimelate epimerase family. In terms of assembly, homodimer.

The protein localises to the cytoplasm. It catalyses the reaction (2S,6S)-2,6-diaminopimelate = meso-2,6-diaminopimelate. It functions in the pathway amino-acid biosynthesis; L-lysine biosynthesis via DAP pathway; DL-2,6-diaminopimelate from LL-2,6-diaminopimelate: step 1/1. Its function is as follows. Catalyzes the stereoinversion of LL-2,6-diaminopimelate (L,L-DAP) to meso-diaminopimelate (meso-DAP), a precursor of L-lysine and an essential component of the bacterial peptidoglycan. The chain is Diaminopimelate epimerase from Acaryochloris marina (strain MBIC 11017).